A 1160-amino-acid polypeptide reads, in one-letter code: DNA polymerase III subunit alpha (1160 aa).

This sequence belongs to the DNA polymerase type-C family. DnaE subfamily. As to quaternary structure, the DNA polymerase III holoenzyme complex contains at least 10 different subunits organized into 3 functionally essential subassemblies: the Pol III core, the beta sliding clamp processivity factor and the clamp-loading complex. The Pol III core (subunits alpha, epsilon and theta) contains the polymerase and the 3'-5' exonuclease proofreading activities. The polymerase is tethered to the template via the dimeric beta sliding clamp processivity factor. The clamp loader (also called gamma complex) assembles the beta sliding clamp onto the primed template and plays a central role in the organization and communication at the replication fork. The clamp-loading complex contains delta, delta', psi and chi, and 3 copies of either or both of two different DnaX proteins, gamma and tau. The DNA replisome complex has a single clamp loader (3 tau and 1 each of delta, delta', psi and chi subunits) which binds 3 Pol III cores (1 core on the leading strand and 2 on the lagging strand) each with a beta sliding clamp dimer. Additional proteins in the replisome are other copies of gamma, psi and chi, Ssb, DNA helicase and RNA primase. Interacts with the beta sliding-clamp subunit via the peptide Gln-Ala-Asp-Met-Phe (residues 920-924).

Its subcellular location is the cytoplasm. It carries out the reaction DNA(n) + a 2'-deoxyribonucleoside 5'-triphosphate = DNA(n+1) + diphosphate. In terms of biological role, DNA polymerase III is a complex, multichain enzyme responsible for most of the replicative synthesis in bacteria. This DNA polymerase also exhibits 3' to 5' exonuclease activity. The alpha chain is the DNA polymerase catalytic subunit. It is tethered to replicating DNA by the beta sliding clamp (dnaN), which confers extremely high processivity to the catalytic subunit, copying a 5.4 kb genome in 11 seconds, a speed of at least 500 nucleotides/second at 30 degrees Celsius. This is DNA polymerase III subunit alpha (dnaE) from Escherichia coli (strain K12).